We begin with the raw amino-acid sequence, 67 residues long: Large ribosomal subunit protein bL35 (67 aa).

The span at 1–11 (MPKLKTRKAAA) shows a compositional bias: basic residues. The interval 1-22 (MPKLKTRKAAAKRFEATGSGKK) is disordered.

The protein belongs to the bacterial ribosomal protein bL35 family.

The polypeptide is Large ribosomal subunit protein bL35 (Microcystis aeruginosa (strain NIES-843 / IAM M-2473)).